Consider the following 469-residue polypeptide: MNPNQKIITIGSVSLTIATICFLMQIAILVTTVTLHFKQYECSSPPNNQVMPCEPIIIERNITEIVYLTNTTIEKEICPKLVEYRNWSKPQCKITGFAPFSKDNSIRLSAGGDIWVTREPYVSCDPGKCYQFALGQGTTLDNKHSNDTIHDRTPYRTLLMNELGVPFHLGTRQVCIAWSSSSCHDGKAWLHVCVTGHDKNATASFIYDGRLVDSIGSWSKNILRTQESECVCINGTCTVVMTDGSASERADTKILFIEEGKIVHISPLSGSAQHVEECSCYPRYPGVRCVCRDNWKGSNRPVVDINVKDYSIVSSYVCSGLVGDTPRKNDRSSSSYCRNPNNEKGNHGVKGWAFDDGNDVWMGRTISEESRSGYETFKVIGGWSTPNSKLQINRQVIVDSDNRSGYSGIFSVEGKSCINRCFYVELIRGREQETRVWWTSNSIVVFCGTSGTYGTGSWPDGADINLMPI.

Residues 1 to 9 (MNPNQKIIT) lie on the Intravirion side of the membrane. Residues 10–30 (IGSVSLTIATICFLMQIAILV) traverse the membrane as a helical segment. The tract at residues 11 to 33 (GSVSLTIATICFLMQIAILVTTV) is involved in apical transport and lipid raft association. The Virion surface segment spans residues 31–469 (TTVTLHFKQY…DGADINLMPI (439 aa)). The interval 36-88 (HFKQYECSSPPNNQVMPCEPIIIERNITEIVYLTNTTIEKEICPKLVEYRNWS) is hypervariable stalk region. N-linked (GlcNAc...) asparagine; by host glycans are attached at residues asparagine 61, asparagine 70, and asparagine 86. The interval 91 to 469 (QCKITGFAPF…DGADINLMPI (379 aa)) is head of neuraminidase. Disulfide bonds link cysteine 92/cysteine 417, cysteine 124/cysteine 129, cysteine 183/cysteine 230, cysteine 232/cysteine 237, cysteine 278/cysteine 291, cysteine 280/cysteine 289, cysteine 318/cysteine 337, and cysteine 421/cysteine 447. Arginine 118 contributes to the substrate binding site. Asparagine 146 carries an N-linked (GlcNAc...) asparagine; by host glycan. Residue aspartate 151 is the Proton donor/acceptor of the active site. Residue arginine 152 coordinates substrate. N-linked (GlcNAc...) asparagine; by host glycans are attached at residues asparagine 200 and asparagine 234. 276 to 277 (EE) is a substrate binding site. Arginine 292 is a substrate binding site. Ca(2+) is bound by residues aspartate 293, glycine 297, and aspartate 324. Arginine 371 serves as a coordination point for substrate. N-linked (GlcNAc...) asparagine; by host glycosylation is present at asparagine 402. Tyrosine 406 (nucleophile) is an active-site residue.

Belongs to the glycosyl hydrolase 34 family. As to quaternary structure, homotetramer. The cofactor is Ca(2+). N-glycosylated.

Its subcellular location is the virion membrane. The protein localises to the host apical cell membrane. The catalysed reaction is Hydrolysis of alpha-(2-&gt;3)-, alpha-(2-&gt;6)-, alpha-(2-&gt;8)- glycosidic linkages of terminal sialic acid residues in oligosaccharides, glycoproteins, glycolipids, colominic acid and synthetic substrates.. Its activity is regulated as follows. Inhibited by the neuraminidase inhibitors zanamivir (Relenza) and oseltamivir (Tamiflu). These drugs interfere with the release of progeny virus from infected cells and are effective against all influenza strains. Resistance to neuraminidase inhibitors is quite rare. Its function is as follows. Catalyzes the removal of terminal sialic acid residues from viral and cellular glycoconjugates. Cleaves off the terminal sialic acids on the glycosylated HA during virus budding to facilitate virus release. Additionally helps virus spread through the circulation by further removing sialic acids from the cell surface. These cleavages prevent self-aggregation and ensure the efficient spread of the progeny virus from cell to cell. Otherwise, infection would be limited to one round of replication. Described as a receptor-destroying enzyme because it cleaves a terminal sialic acid from the cellular receptors. May facilitate viral invasion of the upper airways by cleaving the sialic acid moieties on the mucin of the airway epithelial cells. Likely to plays a role in the budding process through its association with lipid rafts during intracellular transport. May additionally display a raft-association independent effect on budding. Plays a role in the determination of host range restriction on replication and virulence. Sialidase activity in late endosome/lysosome traffic seems to enhance virus replication. The sequence is that of Neuraminidase from Influenza A virus (strain A/Memphis/4/1980 H3N2).